The primary structure comprises 132 residues: Large-conductance mechanosensitive channel (132 aa).

The next 3 helical transmembrane spans lie at 8 to 28 (FALKGNVMDLAVGVVIGGAFG), 30 to 50 (IVSSLVSDVIMPLVGLLLGGV), and 67 to 87 (GAFIQTVVDFLIIAFSIFLFI).

Belongs to the MscL family. In terms of assembly, homopentamer.

It localises to the cell membrane. Channel that opens in response to stretch forces in the membrane lipid bilayer. May participate in the regulation of osmotic pressure changes within the cell. The chain is Large-conductance mechanosensitive channel from Bacillus cytotoxicus (strain DSM 22905 / CIP 110041 / 391-98 / NVH 391-98).